A 90-amino-acid chain; its full sequence is Co-chaperonin GroES (90 aa).

The protein belongs to the GroES chaperonin family. In terms of assembly, heptamer of 7 subunits arranged in a ring. Interacts with the chaperonin GroEL.

The protein localises to the cytoplasm. Together with the chaperonin GroEL, plays an essential role in assisting protein folding. The GroEL-GroES system forms a nano-cage that allows encapsulation of the non-native substrate proteins and provides a physical environment optimized to promote and accelerate protein folding. GroES binds to the apical surface of the GroEL ring, thereby capping the opening of the GroEL channel. The protein is Co-chaperonin GroES of Thermosipho melanesiensis (strain DSM 12029 / CIP 104789 / BI429).